The sequence spans 79 residues: Small ribosomal subunit protein bS18 (79 aa).

This sequence belongs to the bacterial ribosomal protein bS18 family. Part of the 30S ribosomal subunit. Forms a tight heterodimer with protein bS6.

Functionally, binds as a heterodimer with protein bS6 to the central domain of the 16S rRNA, where it helps stabilize the platform of the 30S subunit. The chain is Small ribosomal subunit protein bS18 from Ureaplasma urealyticum serovar 10 (strain ATCC 33699 / Western).